Reading from the N-terminus, the 198-residue chain is GTP cyclohydrolase-2 (198 aa).

Arg-52–Glu-56 serves as a coordination point for GTP. 3 residues coordinate Zn(2+): Cys-57, Cys-68, and Cys-70. Residues Gln-73, Glu-94–Arg-96, and Thr-116 contribute to the GTP site. Asp-128 serves as the catalytic Proton acceptor. Arg-130 serves as the catalytic Nucleophile. Positions 151 and 156 each coordinate GTP.

The protein belongs to the GTP cyclohydrolase II family. It depends on Zn(2+) as a cofactor.

It carries out the reaction GTP + 4 H2O = 2,5-diamino-6-hydroxy-4-(5-phosphoribosylamino)-pyrimidine + formate + 2 phosphate + 3 H(+). Its pathway is cofactor biosynthesis; riboflavin biosynthesis; 5-amino-6-(D-ribitylamino)uracil from GTP: step 1/4. Functionally, catalyzes the conversion of GTP to 2,5-diamino-6-ribosylamino-4(3H)-pyrimidinone 5'-phosphate (DARP), formate and pyrophosphate. The sequence is that of GTP cyclohydrolase-2 from Vibrio cholerae serotype O1 (strain ATCC 39315 / El Tor Inaba N16961).